We begin with the raw amino-acid sequence, 242 residues long: Ribonuclease PH (242 aa).

Phosphate is bound by residues Arg-86 and 124-126 (GTR).

It belongs to the RNase PH family. As to quaternary structure, homohexameric ring arranged as a trimer of dimers.

The enzyme catalyses tRNA(n+1) + phosphate = tRNA(n) + a ribonucleoside 5'-diphosphate. Functionally, phosphorolytic 3'-5' exoribonuclease that plays an important role in tRNA 3'-end maturation. Removes nucleotide residues following the 3'-CCA terminus of tRNAs; can also add nucleotides to the ends of RNA molecules by using nucleoside diphosphates as substrates, but this may not be physiologically important. Probably plays a role in initiation of 16S rRNA degradation (leading to ribosome degradation) during starvation. The protein is Ribonuclease PH of Bacillus pumilus (strain SAFR-032).